A 181-amino-acid chain; its full sequence is Adenine phosphoribosyltransferase (181 aa).

Belongs to the purine/pyrimidine phosphoribosyltransferase family. Homodimer.

It localises to the cytoplasm. The catalysed reaction is AMP + diphosphate = 5-phospho-alpha-D-ribose 1-diphosphate + adenine. The protein operates within purine metabolism; AMP biosynthesis via salvage pathway; AMP from adenine: step 1/1. Functionally, catalyzes a salvage reaction resulting in the formation of AMP, that is energically less costly than de novo synthesis. This is Adenine phosphoribosyltransferase from Brucella abortus (strain S19).